Consider the following 198-residue polypeptide: Putative NADH dehydrogenase/NAD(P)H nitroreductase XOO4267 (198 aa).

Belongs to the nitroreductase family. HadB/RutE subfamily. It depends on FMN as a cofactor.

The protein is Putative NADH dehydrogenase/NAD(P)H nitroreductase XOO4267 of Xanthomonas oryzae pv. oryzae (strain KACC10331 / KXO85).